The sequence spans 160 residues: SsrA-binding protein (160 aa).

Positions 136 to 160 (KRDTMRERDSNRELQRAVRNKGKED) are disordered.

It belongs to the SmpB family.

The protein localises to the cytoplasm. Functionally, required for rescue of stalled ribosomes mediated by trans-translation. Binds to transfer-messenger RNA (tmRNA), required for stable association of tmRNA with ribosomes. tmRNA and SmpB together mimic tRNA shape, replacing the anticodon stem-loop with SmpB. tmRNA is encoded by the ssrA gene; the 2 termini fold to resemble tRNA(Ala) and it encodes a 'tag peptide', a short internal open reading frame. During trans-translation Ala-aminoacylated tmRNA acts like a tRNA, entering the A-site of stalled ribosomes, displacing the stalled mRNA. The ribosome then switches to translate the ORF on the tmRNA; the nascent peptide is terminated with the 'tag peptide' encoded by the tmRNA and targeted for degradation. The ribosome is freed to recommence translation, which seems to be the essential function of trans-translation. The protein is SsrA-binding protein of Pseudomonas putida (strain GB-1).